The chain runs to 656 residues: DNA ligase (656 aa).

Residues 32–36 (DAVYD) and 81–82 (SL) contribute to the NAD(+) site. The N6-AMP-lysine intermediate role is filled by lysine 112. Positions 133, 167, and 306 each coordinate NAD(+). The Zn(2+) site is built by cysteine 400, cysteine 403, cysteine 416, and cysteine 421. The region spanning 577-656 (KSSSVFNNKT…ELLKRLKELD (80 aa)) is the BRCT domain.

It belongs to the NAD-dependent DNA ligase family. LigA subfamily. Mg(2+) serves as cofactor. Mn(2+) is required as a cofactor.

The enzyme catalyses NAD(+) + (deoxyribonucleotide)n-3'-hydroxyl + 5'-phospho-(deoxyribonucleotide)m = (deoxyribonucleotide)n+m + AMP + beta-nicotinamide D-nucleotide.. In terms of biological role, DNA ligase that catalyzes the formation of phosphodiester linkages between 5'-phosphoryl and 3'-hydroxyl groups in double-stranded DNA using NAD as a coenzyme and as the energy source for the reaction. It is essential for DNA replication and repair of damaged DNA. This chain is DNA ligase, found in Helicobacter pylori (strain HPAG1).